A 169-amino-acid polypeptide reads, in one-letter code: Succinate dehydrogenase cytochrome b560 subunit, mitochondrial (169 aa).

A mitochondrion-targeting transit peptide spans 1 to 29 (MAALLLRHVGRHCLRAHLSPQLCIRNAVP). Topologically, residues 30 to 62 (LGTTAKEEMERFWSKNTTLNRPLSPHISIYGWS) are mitochondrial matrix. A helical membrane pass occupies residues 63-92 (LPMAMSICHRGTGIALSAGVSLFGLSALLV). Residues 93–112 (PGSFESHLEFVKSLCLGPAL) are Mitochondrial intermembrane-facing. Residues 113-137 (IHTAKFALVFPLMYHTWNGIRHLMW) traverse the membrane as a helical segment. H127 is a binding site for heme b. The Mitochondrial matrix portion of the chain corresponds to 138 to 144 (DLGKGLT). A helical membrane pass occupies residues 145–166 (ISQLHQSGVAVLVLTVLSSVGL). The Mitochondrial intermembrane segment spans residues 167 to 169 (AAM).

Belongs to the cytochrome b560 family. In terms of assembly, component of complex II composed of four subunits: the flavoprotein (FP) SDHA, iron-sulfur protein (IP) SDHB, and a cytochrome b560 composed of SDHC and SDHD. The cofactor is heme b. Post-translationally, the N-terminus is blocked.

It localises to the mitochondrion inner membrane. The protein operates within carbohydrate metabolism; tricarboxylic acid cycle. Functionally, membrane-anchoring subunit of succinate dehydrogenase (SDH) that is involved in complex II of the mitochondrial electron transport chain and is responsible for transferring electrons from succinate to ubiquinone (coenzyme Q). SDH also oxidizes malate to the non-canonical enol form of oxaloacetate, enol-oxaloacetate. Enol-oxaloacetate, which is a potent inhibitor of the succinate dehydrogenase activity, is further isomerized into keto-oxaloacetate. The sequence is that of Succinate dehydrogenase cytochrome b560 subunit, mitochondrial (SDHC) from Bos taurus (Bovine).